A 106-amino-acid polypeptide reads, in one-letter code: UPF0145 protein PFL_3418 (106 aa).

Belongs to the UPF0145 family.

In Pseudomonas fluorescens (strain ATCC BAA-477 / NRRL B-23932 / Pf-5), this protein is UPF0145 protein PFL_3418.